The sequence spans 563 residues: Ras and Rab interactor-like protein (563 aa).

Residues 181-208 form a disordered region; the sequence is GWGTETPQQTEPETGQKYSLAPRKPTPH. The segment covering 184-196 has biased composition (low complexity); it reads TETPQQTEPETGQ. The VPS9 domain occupies 381–518; sequence AQELRRLRRR…IAHYQPDTGR (138 aa). Residues 539–563 are disordered; it reads TLHQQAQPTAQANQPFEEPWAIGDP. A compositionally biased stretch (low complexity) spans 542–553; sequence QQAQPTAQANQP.

In terms of assembly, interacts with RAB5A, RAB22A and MUSK. As to expression, detected in thymus and spleen (at protein level). Detected in lung, liver, kidney, spleen, thymus and skeletal muscle.

It is found in the cell projection. The protein localises to the ruffle. The protein resides in the cytoplasmic vesicle. Its function is as follows. Guanine nucleotide exchange factor (GEF) for RAB5A and RAB22A that activates RAB5A and RAB22A by exchanging bound GDP for free GTP. Plays a role in endocytosis via its role in activating Rab family members. This Mus musculus (Mouse) protein is Ras and Rab interactor-like protein (Rinl).